A 90-amino-acid chain; its full sequence is MAQQVQSEIRYLTPPSVDVKKKKYCRFKKSGIKYIDYKDPEFLKKFLNEQGKILPRRITGTSLKFQRRIAQAVKRARHLALLPFVTDMMK.

This sequence belongs to the bacterial ribosomal protein bS18 family. In terms of assembly, part of the 30S ribosomal subunit. Forms a tight heterodimer with protein bS6.

Binds as a heterodimer with protein bS6 to the central domain of the 16S rRNA, where it helps stabilize the platform of the 30S subunit. In Bacteroides fragilis (strain YCH46), this protein is Small ribosomal subunit protein bS18.